The sequence spans 226 residues: Ribonuclease 3 (226 aa).

Residues 2-129 (IESISKIIKY…LIGAIYLDGG (128 aa)) form the RNase III domain. Glu-42 provides a ligand contact to Mg(2+). Asp-46 is an active-site residue. Mg(2+) is bound by residues Asn-115 and Glu-118. Glu-118 is a catalytic residue. Positions 154–223 (DAKTILQELV…ASLMLNQIHN (70 aa)) constitute a DRBM domain.

This sequence belongs to the ribonuclease III family. In terms of assembly, homodimer. Mg(2+) serves as cofactor.

The protein resides in the cytoplasm. The enzyme catalyses Endonucleolytic cleavage to 5'-phosphomonoester.. Its function is as follows. Digests double-stranded RNA. Involved in the processing of primary rRNA transcript to yield the immediate precursors to the large and small rRNAs (23S and 16S). Processes some mRNAs, and tRNAs when they are encoded in the rRNA operon. Processes pre-crRNA and tracrRNA of type II CRISPR loci if present in the organism. The sequence is that of Ribonuclease 3 from Ehrlichia chaffeensis (strain ATCC CRL-10679 / Arkansas).